The primary structure comprises 265 residues: MKRIFVQNRELVVPGTLLAQGPYKNGRGTFREGSRIYSTVIGLVDIKGNTIRVIPLEGPYIPEVGDNVIGKIVDVKFSSWVVDIGAPYLANLKIQDFTDEKIDLLRTDLRKFFDIGDIIYGKVKAITEVNNIDLTTKGMPFNGGPLKGGQIVKITPSRVPRVIGRGGSMINMIKKLTMTRIIVGQNGWIWVNGKNEALEKLAIEAILKIDRESHTKGLTDRIKSLLLSRLQELKEKGVIEEIPELEEEPQEETEVNNNDGETRRT.

The S1 motif domain occupies 65 to 137 (GDNVIGKIVD…EVNNIDLTTK (73 aa)). The KH domain occupies 147-205 (KGGQIVKITPSRVPRVIGRGGSMINMIKKLTMTRIIVGQNGWIWVNGKNEALEKLAIEA). Positions 241–254 (EIPELEEEPQEETE) are enriched in acidic residues. The disordered stretch occupies residues 241-265 (EIPELEEEPQEETEVNNNDGETRRT).

It belongs to the RRP4 family. In terms of assembly, component of the archaeal exosome complex. Forms a trimer of Rrp4 and/or Csl4 subunits. The trimer associates with a hexameric ring-like arrangement composed of 3 Rrp41-Rrp42 heterodimers.

It is found in the cytoplasm. Non-catalytic component of the exosome, which is a complex involved in RNA degradation. Increases the RNA binding and the efficiency of RNA degradation. Confers strong poly(A) specificity to the exosome. This chain is Exosome complex component Rrp4, found in Pyrococcus horikoshii (strain ATCC 700860 / DSM 12428 / JCM 9974 / NBRC 100139 / OT-3).